Consider the following 397-residue polypeptide: S-adenosylmethionine synthase (397 aa).

H17 contributes to the ATP binding site. D19 contacts Mg(2+). E45 is a binding site for K(+). Residues E58 and Q101 each contribute to the L-methionine site. Residues 101–111 (QSPDIAQGVDK) are flexible loop. Residues 176 to 178 (DGK), 243 to 244 (RF), D252, 258 to 259 (RK), and K279 contribute to the ATP site. D252 contacts L-methionine. K283 provides a ligand contact to L-methionine.

Belongs to the AdoMet synthase family. In terms of assembly, homotetramer; dimer of dimers. Mg(2+) is required as a cofactor. The cofactor is K(+).

The protein localises to the cytoplasm. It catalyses the reaction L-methionine + ATP + H2O = S-adenosyl-L-methionine + phosphate + diphosphate. Its pathway is amino-acid biosynthesis; S-adenosyl-L-methionine biosynthesis; S-adenosyl-L-methionine from L-methionine: step 1/1. Functionally, catalyzes the formation of S-adenosylmethionine (AdoMet) from methionine and ATP. The overall synthetic reaction is composed of two sequential steps, AdoMet formation and the subsequent tripolyphosphate hydrolysis which occurs prior to release of AdoMet from the enzyme. The polypeptide is S-adenosylmethionine synthase (Staphylococcus aureus (strain USA300)).